The sequence spans 148 residues: Sporulation inhibitor of replication protein SirA (148 aa).

It belongs to the SirA family. As to quaternary structure, interacts with DnaA. Forms a 1:1 complex with domain I of DnaA.

Its subcellular location is the cytoplasm. Its function is as follows. Inhibits DNA replication initiation during sporulation, preventing overinitiation and thus enforcing diploidy; probably the main regulator of sporulation replication initiation under Spo0A control. During sporulation SirA prevents DnaA association with the replication origin to prevent excessive chromosome replication. Alternatively SirA binds to domain I of DnaA and prevent its interaction with DnaD, preventing DNA replication initiation. Upon ectopic expression during vegetative growth reduces chromosome copy number, leading to elongated cells with that can have a single nucleoid or be anucleate. Ectopic expression during vegetative growth blocks DnaA at oriC while blocking recruitment of DnaD to oriC. Plays a significant role during the onset of sporulation. This is Sporulation inhibitor of replication protein SirA from Bacillus subtilis (strain 168).